A 459-amino-acid chain; its full sequence is Cysteine--tRNA ligase (459 aa).

Cys-28 contributes to the Zn(2+) binding site. Positions Val-30 to His-40 match the 'HIGH' region motif. Zn(2+) is bound by residues Cys-209, His-234, and Glu-238. The short motif at Lys-266–Ser-270 is the 'KMSKS' region element. ATP is bound at residue Lys-269.

This sequence belongs to the class-I aminoacyl-tRNA synthetase family. Monomer. Zn(2+) serves as cofactor.

The protein resides in the cytoplasm. The catalysed reaction is tRNA(Cys) + L-cysteine + ATP = L-cysteinyl-tRNA(Cys) + AMP + diphosphate. The polypeptide is Cysteine--tRNA ligase (Vibrio cholerae serotype O1 (strain ATCC 39541 / Classical Ogawa 395 / O395)).